The primary structure comprises 29 residues: Alpha-amylase inhibitor 2 (29 aa).

Belongs to the protease inhibitor I6 (cereal trypsin/alpha-amylase inhibitor) family.

It localises to the secreted. Its function is as follows. Alpha-amylase inhibitor. The chain is Alpha-amylase inhibitor 2 from Saussurea costus (Costus).